We begin with the raw amino-acid sequence, 306 residues long: Proteasome subunit beta (306 aa).

A propeptide spans 1–67 (MTWPNRDQPA…GLPTDAVPHG (67 aa)) (removed in mature form; by autocatalysis). The Nucleophile role is filled by Thr-68.

The protein belongs to the peptidase T1B family. The 20S proteasome core is composed of 14 alpha and 14 beta subunits that assemble into four stacked heptameric rings, resulting in a barrel-shaped structure. The two inner rings, each composed of seven catalytic beta subunits, are sandwiched by two outer rings, each composed of seven alpha subunits. The catalytic chamber with the active sites is on the inside of the barrel. Has a gated structure, the ends of the cylinder being occluded by the N-termini of the alpha-subunits. Is capped by the proteasome-associated ATPase, ARC.

Its subcellular location is the cytoplasm. The enzyme catalyses Cleavage of peptide bonds with very broad specificity.. It participates in protein degradation; proteasomal Pup-dependent pathway. The formation of the proteasomal ATPase ARC-20S proteasome complex, likely via the docking of the C-termini of ARC into the intersubunit pockets in the alpha-rings, may trigger opening of the gate for substrate entry. Interconversion between the open-gate and close-gate conformations leads to a dynamic regulation of the 20S proteasome proteolysis activity. In terms of biological role, component of the proteasome core, a large protease complex with broad specificity involved in protein degradation. In Mycolicibacterium vanbaalenii (strain DSM 7251 / JCM 13017 / BCRC 16820 / KCTC 9966 / NRRL B-24157 / PYR-1) (Mycobacterium vanbaalenii), this protein is Proteasome subunit beta.